The sequence spans 379 residues: Homoserine O-succinyltransferase (379 aa).

The 310-residue stretch at 51 to 360 (NAVLICHALS…DSPYGHDAFL (310 aa)) folds into the AB hydrolase-1 domain. The Nucleophile role is filled by S157. R227 is a binding site for substrate. Residues D323 and H356 contribute to the active site. D357 is a binding site for substrate.

The protein belongs to the AB hydrolase superfamily. MetX family. In terms of assembly, homodimer.

It is found in the cytoplasm. The catalysed reaction is L-homoserine + succinyl-CoA = O-succinyl-L-homoserine + CoA. Its pathway is amino-acid biosynthesis; L-methionine biosynthesis via de novo pathway; O-succinyl-L-homoserine from L-homoserine: step 1/1. Functionally, transfers a succinyl group from succinyl-CoA to L-homoserine, forming succinyl-L-homoserine. The polypeptide is Homoserine O-succinyltransferase (Pseudomonas putida (strain W619)).